The chain runs to 571 residues: Potassium-transporting ATPase potassium-binding subunit (571 aa).

The next 11 helical transmembrane spans lie at 5–25 (GWIQ…PLGS), 64–84 (LAYT…LYAI), 136–156 (GLTH…VALI), 179–199 (LYVL…QGIP), 254–274 (LSNL…TNVF), 285–305 (WAIL…TYWA), 330–350 (FGIA…CGAV), 357–376 (FTAL…EIII), 421–441 (MLGI…ATVV), 488–508 (LAIG…AIAG), and 527–547 (GGLF…LTFF).

Belongs to the KdpA family. In terms of assembly, the system is composed of three essential subunits: KdpA, KdpB and KdpC.

It is found in the cell inner membrane. Functionally, part of the high-affinity ATP-driven potassium transport (or Kdp) system, which catalyzes the hydrolysis of ATP coupled with the electrogenic transport of potassium into the cytoplasm. This subunit binds the periplasmic potassium ions and delivers the ions to the membrane domain of KdpB through an intramembrane tunnel. The sequence is that of Potassium-transporting ATPase potassium-binding subunit from Methylobacterium radiotolerans (strain ATCC 27329 / DSM 1819 / JCM 2831 / NBRC 15690 / NCIMB 10815 / 0-1).